The chain runs to 90 residues: Large ribosomal subunit protein bL27 (90 aa).

The disordered stretch occupies residues 1–22; the sequence is MAHKKSGGSSSNGRDSAGRRLG.

This sequence belongs to the bacterial ribosomal protein bL27 family.

The sequence is that of Large ribosomal subunit protein bL27 from Caulobacter sp. (strain K31).